Here is a 131-residue protein sequence, read N- to C-terminus: D-ribose pyranase (131 aa).

Histidine 20 functions as the Proton donor in the catalytic mechanism. Substrate contacts are provided by residues aspartate 28, histidine 98, and 120–122; that span reads YSN.

The protein belongs to the RbsD / FucU family. RbsD subfamily. Homodecamer.

It localises to the cytoplasm. The enzyme catalyses beta-D-ribopyranose = beta-D-ribofuranose. The protein operates within carbohydrate metabolism; D-ribose degradation; D-ribose 5-phosphate from beta-D-ribopyranose: step 1/2. In terms of biological role, catalyzes the interconversion of beta-pyran and beta-furan forms of D-ribose. The chain is D-ribose pyranase from Lactobacillus johnsonii (strain CNCM I-12250 / La1 / NCC 533).